Reading from the N-terminus, the 288-residue chain is Cyclin-dependent kinase 2 homolog (288 aa).

The region spanning 4 to 284 (YHGLEKIGEG…AKQAIEHPYF (281 aa)) is the Protein kinase domain. Residues 10–18 (IGEGTYGVV) and K32 contribute to the ATP site. Position 14 is a phosphothreonine (T14). The residue at position 15 (Y15) is a Phosphotyrosine. The active-site Proton acceptor is the D125. T158 carries the phosphothreonine modification.

Belongs to the protein kinase superfamily. CMGC Ser/Thr protein kinase family. CDC2/CDKX subfamily. In terms of assembly, may form a complex composed of at least the catalytic subunit CRK2 and a cyclin. Mg(2+) serves as cofactor.

The protein resides in the cytoplasm. It catalyses the reaction L-seryl-[protein] + ATP = O-phospho-L-seryl-[protein] + ADP + H(+). The catalysed reaction is L-threonyl-[protein] + ATP = O-phospho-L-threonyl-[protein] + ADP + H(+). It carries out the reaction [DNA-directed RNA polymerase] + ATP = phospho-[DNA-directed RNA polymerase] + ADP + H(+). Phosphorylation at Thr-14 or Tyr-15 inactivates the enzyme, while phosphorylation at Thr-158 activates it. Its function is as follows. Serine/threonine-protein kinase. Involved in the control of the cell cycle. Required for entry into S-phase and mitosis. Probable component of the kinase complex that phosphorylates the repetitive C-terminus of RNA polymerase II. The sequence is that of Cyclin-dependent kinase 2 homolog from Plasmodium berghei (strain Anka).